The following is a 371-amino-acid chain: Alanine dehydrogenase (371 aa).

Arg15 and Lys75 together coordinate substrate. The Proton donor/acceptor role is filled by His96. NAD(+) is bound by residues Ser134, 178 to 179, Asp198, Lys203, Ser220, 239 to 240, 267 to 270, Arg279, and 298 to 301; these read TA, VL, IAID, and VANM. The active-site Proton donor/acceptor is the Asp270. Residues Glu323 and His327 each coordinate Mg(2+).

It belongs to the AlaDH/PNT family. As to quaternary structure, homohexamer. Trimer of dimers. Mg(2+) serves as cofactor.

It localises to the secreted. It carries out the reaction L-alanine + NAD(+) + H2O = pyruvate + NH4(+) + NADH + H(+). The protein operates within amino-acid degradation; L-alanine degradation via dehydrogenase pathway; NH(3) and pyruvate from L-alanine: step 1/1. Catalyzes the reversible reductive amination of pyruvate to L-alanine. However, since the physiological environment of M.tuberculosis has a neutral pH, it can be assumed that the enzyme catalyzes exclusively the formation of L-alanine. May play a role in cell wall synthesis as L-alanine is an important constituent of the peptidoglycan layer. The protein is Alanine dehydrogenase (ald) of Mycobacterium tuberculosis (strain CDC 1551 / Oshkosh).